Here is a 610-residue protein sequence, read N- to C-terminus: UvrABC system protein C (610 aa).

The GIY-YIG domain maps to 16 to 94 (SQPGVYRMYD…IKLYQPRYNV (79 aa)). The region spanning 204 to 239 (DQVLTQLIARMEKASQDLAFEEAARIRDQIQAVRRV) is the UVR domain.

The protein belongs to the UvrC family. Interacts with UvrB in an incision complex.

Its subcellular location is the cytoplasm. The UvrABC repair system catalyzes the recognition and processing of DNA lesions. UvrC both incises the 5' and 3' sides of the lesion. The N-terminal half is responsible for the 3' incision and the C-terminal half is responsible for the 5' incision. The polypeptide is UvrABC system protein C (Salmonella dublin (strain CT_02021853)).